Consider the following 315-residue polypeptide: Calcium homeostasis modulator protein 4 (315 aa).

Residues 1 to 14 are Cytoplasmic-facing; that stretch reads MSPDLNCISSSLLR. A helical transmembrane segment spans residues 15-37; it reads SEPCINSLIAILTVCGQQLFSSY. The Extracellular portion of the chain corresponds to 38-48; the sequence is TFSCPCQVGKN. 2 cysteine pairs are disulfide-bonded: Cys-41–Cys-132 and Cys-43–Cys-163. A helical membrane pass occupies residues 49 to 71; it reads FYYGSAFLVVPALILLIAGYALR. Topologically, residues 72 to 104 are cytoplasmic; sequence GQMWTVASEYCCCSCTPPYRRSSPLERRLACLM. The chain crosses the membrane as a helical span at residues 105-130; sequence FFDITGRALVAPLTWLTVTLLTGTYY. Topologically, residues 131-184 are extracellular; the sequence is ECAASEFASVDQYPMFANVTPSKREEMLAGFPCYTSAPSDVIPIRDEVALLHRY. Residues 185–208 traverse the membrane as a helical segment; that stretch reads QSQMLGWILVVLATIALLLSKCLA. The Cytoplasmic segment spans residues 209 to 315; the sequence is RCCSPLTSLQ…DRQEGIEMKP (107 aa).

The protein belongs to the CALHM family. Oligomerizes to form decameric and undecameric channels. Two hemichannels can assemble in a tail-to-tail manner to form a gap junction.

The protein localises to the cell membrane. Functionally, may assemble to form gap junction channel-like structures involved in intercellular communication. Channel gating and ion conductance are likely regulated by membrane lipids rather than by membrane depolarization or extracellular calcium levels. The chain is Calcium homeostasis modulator protein 4 from Mus musculus (Mouse).